Reading from the N-terminus, the 391-residue chain is Phosphoglycerate kinase (391 aa).

Substrate is bound by residues 21 to 23 (DLN), R36, 59 to 62 (HLGR), R113, and R146. Residues K197, E319, and 345-348 (GGDT) contribute to the ATP site.

The protein belongs to the phosphoglycerate kinase family. In terms of assembly, monomer.

It localises to the cytoplasm. It catalyses the reaction (2R)-3-phosphoglycerate + ATP = (2R)-3-phospho-glyceroyl phosphate + ADP. It functions in the pathway carbohydrate degradation; glycolysis; pyruvate from D-glyceraldehyde 3-phosphate: step 2/5. The chain is Phosphoglycerate kinase from Xanthomonas euvesicatoria pv. vesicatoria (strain 85-10) (Xanthomonas campestris pv. vesicatoria).